A 321-amino-acid polypeptide reads, in one-letter code: Lipoyl synthase (321 aa).

Cys-68, Cys-73, Cys-79, Cys-94, Cys-98, Cys-101, and Ser-308 together coordinate [4Fe-4S] cluster. The Radical SAM core domain maps to 80-297 (FNHGTATFMI…KALADELGFT (218 aa)).

The protein belongs to the radical SAM superfamily. Lipoyl synthase family. [4Fe-4S] cluster is required as a cofactor.

It localises to the cytoplasm. The enzyme catalyses [[Fe-S] cluster scaffold protein carrying a second [4Fe-4S](2+) cluster] + N(6)-octanoyl-L-lysyl-[protein] + 2 oxidized [2Fe-2S]-[ferredoxin] + 2 S-adenosyl-L-methionine + 4 H(+) = [[Fe-S] cluster scaffold protein] + N(6)-[(R)-dihydrolipoyl]-L-lysyl-[protein] + 4 Fe(3+) + 2 hydrogen sulfide + 2 5'-deoxyadenosine + 2 L-methionine + 2 reduced [2Fe-2S]-[ferredoxin]. It functions in the pathway protein modification; protein lipoylation via endogenous pathway; protein N(6)-(lipoyl)lysine from octanoyl-[acyl-carrier-protein]: step 2/2. Its function is as follows. Catalyzes the radical-mediated insertion of two sulfur atoms into the C-6 and C-8 positions of the octanoyl moiety bound to the lipoyl domains of lipoate-dependent enzymes, thereby converting the octanoylated domains into lipoylated derivatives. The protein is Lipoyl synthase of Shewanella oneidensis (strain ATCC 700550 / JCM 31522 / CIP 106686 / LMG 19005 / NCIMB 14063 / MR-1).